The following is a 354-amino-acid chain: Methylthioribose-1-phosphate isomerase (354 aa).

Residues 58-60 (RGA), Arg101, and Gln204 contribute to the substrate site. The active-site Proton donor is the Asp245. 255 to 256 (NK) is a binding site for substrate.

It belongs to the eIF-2B alpha/beta/delta subunits family. MtnA subfamily.

The catalysed reaction is 5-(methylsulfanyl)-alpha-D-ribose 1-phosphate = 5-(methylsulfanyl)-D-ribulose 1-phosphate. Its pathway is amino-acid biosynthesis; L-methionine biosynthesis via salvage pathway; L-methionine from S-methyl-5-thio-alpha-D-ribose 1-phosphate: step 1/6. In terms of biological role, catalyzes the interconversion of methylthioribose-1-phosphate (MTR-1-P) into methylthioribulose-1-phosphate (MTRu-1-P). This is Methylthioribose-1-phosphate isomerase from Xanthomonas euvesicatoria pv. vesicatoria (strain 85-10) (Xanthomonas campestris pv. vesicatoria).